We begin with the raw amino-acid sequence, 937 residues long: Vacuolar membrane protease (937 aa).

At 1–16 the chain is on the cytoplasmic side; sequence PNGFVKFIRSIFGYRK. The helical transmembrane segment at 17–37 threads the bilayer; that stretch reads TSLTLFVILTYVAVLLLAYLD. At 38–373 the chain is on the vacuolar side; the sequence is HSLYYSVDLP…FPTSQVVVAS (336 aa). Asn106 and Asn140 each carry an N-linked (GlcNAc...) asparagine glycan. Residues His154 and Asp166 each contribute to the Zn(2+) site. The Proton acceptor role is filled by Glu201. Zn(2+)-binding residues include Glu202, Glu227, and His300. A helical transmembrane segment spans residues 374–394; that stretch reads ILLLVLIPGISIPFLIIIFGY. The Cytoplasmic portion of the chain corresponds to 395–407; that stretch reads KKNWELSFVNVTK. The chain crosses the membrane as a helical span at residues 408 to 428; the sequence is FPISLAISAALLNLFTNGFIV. The Vacuolar segment spans residues 429–437; sequence PFNQFLPNS. Residues 438 to 458 form a helical membrane-spanning segment; the sequence is SPFALVAILFATFLLLNYLIL. Residues 459–475 are Cytoplasmic-facing; that stretch reads NGINLIFVSYKIVNHDE. The chain crosses the membrane as a helical span at residues 476–496; it reads KLISIIETSFLYWVVLIYSTA. Over 497–510 the chain is Vacuolar; sequence KLANNVIGDDHSGE. Residues 511–531 form a helical membrane-spanning segment; sequence FPIIFLCALQAVASIFGLIGW. At 532-580 the chain is on the cytoplasmic side; that stretch reads SFKPVPKEHYVVVPQEEAEPLLGSSDNFNYGSPDVEDDRLVSDGSYDWS. A helical transmembrane segment spans residues 581 to 601; the sequence is IQFLTIVPISTYLIYNSGFLV. Topologically, residues 602 to 618 are vacuolar; that stretch reads VDGINKSIQESLISQNL. Asn606 carries an N-linked (GlcNAc...) asparagine glycan. Residues 619–639 form a helical membrane-spanning segment; sequence IYKLLQTFAISLSIPLLPFIF. The Cytoplasmic portion of the chain corresponds to 640–643; the sequence is KVNR. The chain crosses the membrane as a helical span at residues 644 to 664; that stretch reads LFVLALFLISTIGVLFVATAD. Over 665-937 the chain is Vacuolar; sequence SFNVANPLKL…LVSVSKTVEL (273 aa). Residues Asn758, Asn870, and Asn887 are each glycosylated (N-linked (GlcNAc...) asparagine).

Belongs to the peptidase M28 family. Requires Zn(2+) as cofactor.

It is found in the vacuole membrane. Functionally, may be involved in vacuolar sorting and osmoregulation. In Scheffersomyces stipitis (strain ATCC 58785 / CBS 6054 / NBRC 10063 / NRRL Y-11545) (Yeast), this protein is Vacuolar membrane protease.